We begin with the raw amino-acid sequence, 517 residues long: MTQERKIKRALISVSDKTGLEVFAKGLHKLGVELVSTSGTAKFLKAAGLPVRDLSDLTGFPEILDGRVKTLHPRVHGAILYKRDDDAHCKVIKDMGIEDIDMLVVNLYPFRETAAKAKHSFDAEVIENIDIGGPSMLRSAAKNFAHVAVLCRPKDYEVVLSEMAASQGALSYATRQRLCVEAFTHTAEYDAAISEEFKKGLNHEFPESKIVVLHKTQDLRYGENPHQKAVLYSQKKDFSFEQLHGKELSYNNILDAFGTWDAVCDFDLPACVIFKHVTPCGIGTGKVLTEAFNNAWACDPKSAFGGIIALNKPMQRDIAEAISKVFIEAVCAPDYDLESLEILKQKKNIRILKRNSPLSAAYQLKSVGDEVLLQQPDRTLLLDNKWDCVTKRKPTEEEDKALKFAWASVKHVKSNAVILTSESASVGIGAGQMSRVDSVKMAGMKFEEYLQENKKPKVLVIGSDAFFPFRDGVDAAAKLGVSAIVQPGGSVRDEEAIAAADEHGIAMIFTGLRHFRH.

Residues 1 to 151 (MTQERKIKRA…KNFAHVAVLC (151 aa)) form the MGS-like domain.

It belongs to the PurH family.

It catalyses the reaction (6R)-10-formyltetrahydrofolate + 5-amino-1-(5-phospho-beta-D-ribosyl)imidazole-4-carboxamide = 5-formamido-1-(5-phospho-D-ribosyl)imidazole-4-carboxamide + (6S)-5,6,7,8-tetrahydrofolate. It carries out the reaction IMP + H2O = 5-formamido-1-(5-phospho-D-ribosyl)imidazole-4-carboxamide. It functions in the pathway purine metabolism; IMP biosynthesis via de novo pathway; 5-formamido-1-(5-phospho-D-ribosyl)imidazole-4-carboxamide from 5-amino-1-(5-phospho-D-ribosyl)imidazole-4-carboxamide (10-formyl THF route): step 1/1. It participates in purine metabolism; IMP biosynthesis via de novo pathway; IMP from 5-formamido-1-(5-phospho-D-ribosyl)imidazole-4-carboxamide: step 1/1. The polypeptide is Bifunctional purine biosynthesis protein PurH (Elusimicrobium minutum (strain Pei191)).